We begin with the raw amino-acid sequence, 473 residues long: Flagellum-specific ATP synthase (473 aa).

187 to 194 is an ATP binding site; it reads AGSGVGKS.

It belongs to the ATPase alpha/beta chains family.

It localises to the cytoplasm. The enzyme catalyses ATP + H2O + 4 H(+)(in) = ADP + phosphate + 5 H(+)(out). In terms of biological role, probable catalytic subunit of a protein translocase for flagellum-specific export, or a proton translocase involved in local circuits at the flagellum. The sequence is that of Flagellum-specific ATP synthase (fliI) from Agrobacterium fabrum (strain C58 / ATCC 33970) (Agrobacterium tumefaciens (strain C58)).